Consider the following 411-residue polypeptide: Endo-1,4-beta-xylanase A (411 aa).

The N-terminal stretch at 1-33 is a signal peptide; sequence MKKFKIRKLMARVLALALVFSTFFMVSKVDANA. The GH10 domain maps to 34–382; the sequence is ASYNLMETYG…KPAYDEVVKA (349 aa). Glu201 serves as the catalytic Proton donor. The active-site Nucleophile is the Glu311. The tract at residues 387 to 411 is disordered; that stretch reads FGNPGSFTPQPTITPQPTPTPSGQT. Over residues 398–411 the composition is skewed to pro residues; sequence TITPQPTPTPSGQT.

Belongs to the glycosyl hydrolase 10 (cellulase F) family.

The catalysed reaction is Endohydrolysis of (1-&gt;4)-beta-D-xylosidic linkages in xylans.. It functions in the pathway glycan degradation; xylan degradation. In terms of biological role, b.fibrisolvens is located in the rumen of ruminant animals, where it contributes to the animal's digestion of plant material by hydrolyzing hemicellulose with its xylanases. In Butyrivibrio fibrisolvens, this protein is Endo-1,4-beta-xylanase A (xynA).